A 138-amino-acid polypeptide reads, in one-letter code: ATP synthase epsilon chain (138 aa).

The protein belongs to the ATPase epsilon chain family. F-type ATPases have 2 components, CF(1) - the catalytic core - and CF(0) - the membrane proton channel. CF(1) has five subunits: alpha(3), beta(3), gamma(1), delta(1), epsilon(1). CF(0) has three main subunits: a, b and c.

It localises to the cell inner membrane. In terms of biological role, produces ATP from ADP in the presence of a proton gradient across the membrane. This Endomicrobium trichonymphae protein is ATP synthase epsilon chain.